A 100-amino-acid polypeptide reads, in one-letter code: Urease subunit gamma (100 aa).

It belongs to the urease gamma subunit family. As to quaternary structure, heterotrimer of UreA (gamma), UreB (beta) and UreC (alpha) subunits. Three heterotrimers associate to form the active enzyme.

It localises to the cytoplasm. The catalysed reaction is urea + 2 H2O + H(+) = hydrogencarbonate + 2 NH4(+). It participates in nitrogen metabolism; urea degradation; CO(2) and NH(3) from urea (urease route): step 1/1. This chain is Urease subunit gamma, found in Yersinia aldovae.